The chain runs to 617 residues: MLFLRRIAVVFFVFTSFSAAQNSTCPLDFSVLEPFRRPKPDGATTCQYLLQGLRLLYSHHLRQTGSFLPPPESAASCWAALQSSVAGFLPRFDVRSTCGFQTPWISQGCMDITTRSQFESLIPNSSLATTAMRCNTSLESNTPCASCTQSLSAFQPYLSGPSLGNVSDCASFPSIYAAAFANSLGPTDKGTAKCLFQLDLASPTSSGANKVKVLVSSFSVLLVASVLVITAWFWYCRRKKSKLLKPRDTSLEAGTQSRLDSMSESTTLVKFSFDEIKKATNNFSRHNIIGRGGYGNVFKGALPDGTQVAFKRFKNCSAGGDANFAHEVEVIASIRHVNLLALRGYCTATTPYEGHQRIIVCDLVSNGSLHDHLFGDLEAQLAWPLRQRIALGMARGLAYLHYGAQPSIIHRDIKASNILLDERFEAKVADFGLAKFNPEGMTHMSTRVAGTMGYVAPEYALYGQLTEKSDVYSFGVVLLELLSRRKAIVTDEEGQPVSVADWAWSLVREGQTLDVVEDGMPEKGPPEVLEKYVLIAVLCSHPQLHARPTMDQVVKMLESNEFTVIAIPQRPIPLVACREEIDRSVSSSSGSGKLTSPTGYQAFSFGGDGPSGNTNTT.

An N-terminal signal peptide occupies residues 1 to 20; it reads MLFLRRIAVVFFVFTSFSAA. At 21–212 the chain is on the extracellular side; the sequence is QNSTCPLDFS…PTSSGANKVK (192 aa). 4 N-linked (GlcNAc...) asparagine glycosylation sites follow: N22, N124, N135, and N165. Residues 213–233 traverse the membrane as a helical segment; sequence VLVSSFSVLLVASVLVITAWF. The Cytoplasmic segment spans residues 234-617; the sequence is WYCRRKKSKL…DGPSGNTNTT (384 aa). The region spanning 283–563 is the Protein kinase domain; it reads FSRHNIIGRG…VKMLESNEFT (281 aa). Residues 289-297 and K311 contribute to the ATP site; that span reads IGRGGYGNV. D412 functions as the Proton acceptor in the catalytic mechanism. The segment at 585-617 is disordered; the sequence is VSSSSGSGKLTSPTGYQAFSFGGDGPSGNTNTT.

Belongs to the protein kinase superfamily. Ser/Thr protein kinase family. Expressed in the whole plant at low levels.

It is found in the cell membrane. The enzyme catalyses L-seryl-[protein] + ATP = O-phospho-L-seryl-[protein] + ADP + H(+). The catalysed reaction is L-threonyl-[protein] + ATP = O-phospho-L-threonyl-[protein] + ADP + H(+). The chain is Probable LRR receptor-like serine/threonine-protein kinase RKF3 (RKF3) from Arabidopsis thaliana (Mouse-ear cress).